Consider the following 254-residue polypeptide: Zinc import ATP-binding protein ZnuC (254 aa).

The ABC transporter domain occupies 5-219 (VELKEVCLSF…PEFARLFGRP (215 aa)). An ATP-binding site is contributed by 37–44 (GPNGAGKS). Positions 233–242 (CDGEHHHHEP) are enriched in basic and acidic residues. The tract at residues 233–254 (CDGEHHHHEPQVPVIRLPSRNQ) is disordered.

Belongs to the ABC transporter superfamily. Zinc importer (TC 3.A.1.15.5) family. As to quaternary structure, the complex is composed of two ATP-binding proteins (ZnuC), two transmembrane proteins (ZnuB) and a solute-binding protein (ZnuA).

The protein resides in the cell inner membrane. The catalysed reaction is Zn(2+)(out) + ATP(in) + H2O(in) = Zn(2+)(in) + ADP(in) + phosphate(in) + H(+)(in). Its function is as follows. Part of the ABC transporter complex ZnuABC involved in zinc import. Responsible for energy coupling to the transport system. This Aeromonas hydrophila subsp. hydrophila (strain ATCC 7966 / DSM 30187 / BCRC 13018 / CCUG 14551 / JCM 1027 / KCTC 2358 / NCIMB 9240 / NCTC 8049) protein is Zinc import ATP-binding protein ZnuC.